Consider the following 366-residue polypeptide: Ribosomal RNA large subunit methyltransferase M (366 aa).

Residues Ser-188, 221–224 (CPGG), Asp-240, Asp-260, and Asp-277 contribute to the S-adenosyl-L-methionine site. Catalysis depends on Lys-306, which acts as the Proton acceptor.

It belongs to the class I-like SAM-binding methyltransferase superfamily. RNA methyltransferase RlmE family. RlmM subfamily. As to quaternary structure, monomer.

Its subcellular location is the cytoplasm. The catalysed reaction is cytidine(2498) in 23S rRNA + S-adenosyl-L-methionine = 2'-O-methylcytidine(2498) in 23S rRNA + S-adenosyl-L-homocysteine + H(+). Functionally, catalyzes the 2'-O-methylation at nucleotide C2498 in 23S rRNA. The sequence is that of Ribosomal RNA large subunit methyltransferase M from Salmonella agona (strain SL483).